A 303-amino-acid polypeptide reads, in one-letter code: Porphobilinogen deaminase (303 aa).

An S-(dipyrrolylmethanemethyl)cysteine modification is found at cysteine 240.

Belongs to the HMBS family. In terms of assembly, monomer. It depends on dipyrromethane as a cofactor.

It carries out the reaction 4 porphobilinogen + H2O = hydroxymethylbilane + 4 NH4(+). The protein operates within porphyrin-containing compound metabolism; protoporphyrin-IX biosynthesis; coproporphyrinogen-III from 5-aminolevulinate: step 2/4. Functionally, tetrapolymerization of the monopyrrole PBG into the hydroxymethylbilane pre-uroporphyrinogen in several discrete steps. The polypeptide is Porphobilinogen deaminase (Stenotrophomonas maltophilia (strain K279a)).